A 226-amino-acid chain; its full sequence is 7-cyano-7-deazaguanine synthase (226 aa).

Leu-10 to Ala-20 lines the ATP pocket. Residues Cys-191, Cys-199, Cys-202, and Cys-205 each contribute to the Zn(2+) site.

It belongs to the QueC family. Requires Zn(2+) as cofactor.

The enzyme catalyses 7-carboxy-7-deazaguanine + NH4(+) + ATP = 7-cyano-7-deazaguanine + ADP + phosphate + H2O + H(+). It participates in purine metabolism; 7-cyano-7-deazaguanine biosynthesis. Functionally, catalyzes the ATP-dependent conversion of 7-carboxy-7-deazaguanine (CDG) to 7-cyano-7-deazaguanine (preQ(0)). This chain is 7-cyano-7-deazaguanine synthase, found in Parasynechococcus marenigrum (strain WH8102).